The sequence spans 219 residues: 2-hydroxy-3-keto-5-methylthiopentenyl-1-phosphate phosphatase (219 aa).

The protein belongs to the HAD-like hydrolase superfamily. MtnX family.

It carries out the reaction 2-hydroxy-5-methylsulfanyl-3-oxopent-1-enyl phosphate + H2O = 1,2-dihydroxy-5-(methylsulfanyl)pent-1-en-3-one + phosphate. The protein operates within amino-acid biosynthesis; L-methionine biosynthesis via salvage pathway; L-methionine from S-methyl-5-thio-alpha-D-ribose 1-phosphate: step 4/6. In terms of biological role, dephosphorylates 2-hydroxy-3-keto-5-methylthiopentenyl-1-phosphate (HK-MTPenyl-1-P) yielding 1,2-dihydroxy-3-keto-5-methylthiopentene (DHK-MTPene). This Bacillus cereus (strain B4264) protein is 2-hydroxy-3-keto-5-methylthiopentenyl-1-phosphate phosphatase.